Here is a 132-residue protein sequence, read N- to C-terminus: MVMTDPIADMLTRIRNANMVRHEKLEVPASKIKREIAEILKREGFIRDVEYIEDNKQGILRIFLKYGPNNERVITGLKRISKPGLRVYVKAHEVPRVLNGLGIAILSTSQGILTDKEARQKGTGGEVIAYVW.

This sequence belongs to the universal ribosomal protein uS8 family. As to quaternary structure, part of the 30S ribosomal subunit. Contacts proteins S5 and S12.

Its function is as follows. One of the primary rRNA binding proteins, it binds directly to 16S rRNA central domain where it helps coordinate assembly of the platform of the 30S subunit. This is Small ribosomal subunit protein uS8 from Geobacillus thermodenitrificans (strain NG80-2).